The sequence spans 436 residues: Gustatory receptor for sugar taste 61a (436 aa).

Over 1 to 78 the chain is Cytoplasmic; the sequence is MSRTSDDIRK…PQDVKFKVRS (78 aa). Residues 79–99 traverse the membrane as a helical segment; that stretch reads IGLAVTGLFLLLGGMKTLVGA. The Extracellular segment spans residues 100–111; it reads NILFTEGLNAKN. The chain crosses the membrane as a helical span at residues 112–132; that stretch reads IVGLVFLIVGMVNWLNFVGFA. Over 133-164 the chain is Cytoplasmic; it reads RSWSHIMLPWSSVDILMLFPPYKRGKRSLRSK. A helical transmembrane segment spans residues 165–185; it reads VNVLALSVVVLAVGDHMLYYA. Topologically, residues 186–214 are extracellular; the sequence is SGYCSYSMHILQCHTNHSRITFGLYLEKE. The N-linked (GlcNAc...) asparagine glycan is linked to asparagine 201. Residues 215-235 traverse the membrane as a helical segment; sequence FSDIMFIMPFNIFSMCYGFWL. Residues 236 to 237 lie on the Cytoplasmic side of the membrane; that stretch reads NG. The helical transmembrane segment at 238–258 threads the bilayer; it reads AFTFLWNFMDIFIVMTSIGLA. Residues 259–304 are Extracellular-facing; sequence QRFQQFAARVGALEGRHVPEALWYDIRRDHIRLCELASLVEASMSN. A helical transmembrane segment spans residues 305–325; that stretch reads IVFVSCANNVYVICNQALAIF. Over 326–334 the chain is Cytoplasmic; sequence TKLRHPINY. A helical transmembrane segment spans residues 335 to 355; it reads VYFWYSLIFLLARTSLVFMTA. Residues 356–436 are Extracellular-facing; sequence SKIHDASLLP…AKSHKGLRCA (81 aa).

The protein belongs to the insect chemoreceptor superfamily. Gustatory receptor (GR) family. Gr5a subfamily. Expressed in sweet sensing neurons of classical chemosensory sensilla, but also in two supersensitive neurons of atypical taste sensilla.

The protein resides in the cell membrane. Its function is as follows. One of the few identified sugar gustatory receptors identified so far with glucose being its primary ligand and which mediates acceptance behavior. This chain is Gustatory receptor for sugar taste 61a (Gr61a), found in Drosophila melanogaster (Fruit fly).